The sequence spans 609 residues: Glutamine--fructose-6-phosphate aminotransferase [isomerizing] (609 aa).

Catalysis depends on cysteine 2, which acts as the Nucleophile; for GATase activity. The Glutamine amidotransferase type-2 domain occupies 2-218 (CGIVGAVAQR…EGDVVEVTRR (217 aa)). SIS domains follow at residues 286 to 426 (ADAL…LKGA) and 458 to 599 (LAEG…VDQP). Lysine 604 serves as the catalytic For Fru-6P isomerization activity.

Homodimer.

Its subcellular location is the cytoplasm. The enzyme catalyses D-fructose 6-phosphate + L-glutamine = D-glucosamine 6-phosphate + L-glutamate. Its function is as follows. Catalyzes the first step in hexosamine metabolism, converting fructose-6P into glucosamine-6P using glutamine as a nitrogen source. The protein is Glutamine--fructose-6-phosphate aminotransferase [isomerizing] of Yersinia pestis.